The sequence spans 429 residues: Tol-Pal system protein TolB (429 aa).

A signal peptide spans 1-22 (MTRRLFILITIMLCLIPALLHS). Disordered regions lie at residues 362–383 (PDGT…RWSP) and 407–429 (GSGQ…SPRW). Polar residues predominate over residues 363–374 (DGTNDTRLTSEG).

It belongs to the TolB family. In terms of assembly, the Tol-Pal system is composed of five core proteins: the inner membrane proteins TolA, TolQ and TolR, the periplasmic protein TolB and the outer membrane protein Pal. They form a network linking the inner and outer membranes and the peptidoglycan layer.

It is found in the periplasm. Part of the Tol-Pal system, which plays a role in outer membrane invagination during cell division and is important for maintaining outer membrane integrity. The sequence is that of Tol-Pal system protein TolB from Geobacter metallireducens (strain ATCC 53774 / DSM 7210 / GS-15).